A 321-amino-acid polypeptide reads, in one-letter code: tRNA(Ile)-lysidine synthase (321 aa).

30 to 35 (SGGSDS) lines the ATP pocket.

Belongs to the tRNA(Ile)-lysidine synthase family.

Its subcellular location is the cytoplasm. The enzyme catalyses cytidine(34) in tRNA(Ile2) + L-lysine + ATP = lysidine(34) in tRNA(Ile2) + AMP + diphosphate + H(+). In terms of biological role, ligates lysine onto the cytidine present at position 34 of the AUA codon-specific tRNA(Ile) that contains the anticodon CAU, in an ATP-dependent manner. Cytidine is converted to lysidine, thus changing the amino acid specificity of the tRNA from methionine to isoleucine. This is tRNA(Ile)-lysidine synthase from Chlamydia trachomatis serovar L2 (strain ATCC VR-902B / DSM 19102 / 434/Bu).